We begin with the raw amino-acid sequence, 403 residues long: ESX-5 secretion system protein EccE5 (403 aa).

2 helical membrane-spanning segments follow: residues 9–29 (LALSWARLTTVFVIDLLILIV) and 43–63 (IAWWVGVGIAVLVTLLSVVTY).

Belongs to the EccE family. In terms of assembly, part of the ESX-5 / type VII secretion system (T7SS), which is composed of cytosolic and membrane components. The ESX-5 membrane complex is composed of EccB5, EccC5, EccD5 and EccE5.

It localises to the cell inner membrane. Part of the ESX-5 specialized secretion system, which is responsible for the secretion of EsxN and a number of PE_PGRS and PPE proteins. The protein is ESX-5 secretion system protein EccE5 of Mycobacterium marinum (strain ATCC BAA-535 / M).